The chain runs to 193 residues: tRNA(Phe) 7-((3-amino-3-carboxypropyl)-4-demethylwyosine(37)-N(4))-methyltransferase (193 aa).

The protein belongs to the TYW3 family.

The enzyme catalyses 4-demethyl-7-[(3S)-3-amino-3-carboxypropyl]wyosine(37) in tRNA(Phe) + S-adenosyl-L-methionine = 7-[(3S)-3-amino-3-carboxypropyl]wyosine(37) in tRNA(Phe) + S-adenosyl-L-homocysteine + H(+). Functionally, S-adenosyl-L-methionine-dependent methyltransferase that acts as a component of the wyosine derivatives biosynthesis pathway. Probably methylates N-4 position of wybutosine-86 to produce wybutosine-72. In Methanocaldococcus jannaschii (strain ATCC 43067 / DSM 2661 / JAL-1 / JCM 10045 / NBRC 100440) (Methanococcus jannaschii), this protein is tRNA(Phe) 7-((3-amino-3-carboxypropyl)-4-demethylwyosine(37)-N(4))-methyltransferase.